The chain runs to 378 residues: Cytochrome b (378 aa).

4 helical membrane-spanning segments follow: residues 32–52, 76–97, 112–132, and 177–197; these read FGSL…FLAM, WLIR…FLHV, WNIG…GYVL, and FFAF…VHLL. Heme b contacts are provided by histidine 82 and histidine 96. Histidine 181 and histidine 195 together coordinate heme b. Position 200 (histidine 200) interacts with a ubiquinone. 4 consecutive transmembrane segments (helical) span residues 225–245, 287–307, 319–339, and 346–366; these read IKDA…VLFF, LGGV…PILH, LSQC…WIGG, and FITI…FALP.

Belongs to the cytochrome b family. The cytochrome bc1 complex contains 11 subunits: 3 respiratory subunits (MT-CYB, CYC1 and UQCRFS1), 2 core proteins (UQCRC1 and UQCRC2) and 6 low-molecular weight proteins (UQCRH/QCR6, UQCRB/QCR7, UQCRQ/QCR8, UQCR10/QCR9, UQCR11/QCR10 and a cleavage product of UQCRFS1). This cytochrome bc1 complex then forms a dimer. Requires heme b as cofactor.

It localises to the mitochondrion inner membrane. Functionally, component of the ubiquinol-cytochrome c reductase complex (complex III or cytochrome b-c1 complex) that is part of the mitochondrial respiratory chain. The b-c1 complex mediates electron transfer from ubiquinol to cytochrome c. Contributes to the generation of a proton gradient across the mitochondrial membrane that is then used for ATP synthesis. In Sciurus aberti (Abert's squirrel), this protein is Cytochrome b (MT-CYB).